Here is a 379-residue protein sequence, read N- to C-terminus: Presenilin-associated rhomboid-like protein, mitochondrial (379 aa).

A mitochondrion-targeting transit peptide spans 1-52; sequence MAWRGWAQRGWGCGQAWGASVGGRSCEELTAVLTPPQLLGRRFNFFIQQKCG. The Mitochondrial matrix portion of the chain corresponds to 53–101; sequence FRKAPRKVEPRRSDPGTSGEAYKRSALIPPVEETVFYPSPYPIRSLIKP. Serine 65 is modified (phosphoserine). Threonine 69 carries the phosphothreonine modification. Position 70 is a phosphoserine (serine 70). A helical transmembrane segment spans residues 102–121; sequence LFFTVGFTGCAFGSAAIWQY. Residues 122–167 lie on the Mitochondrial intermembrane side of the membrane; sequence ESLKSRVQSYFDGIKADWLDSIRPQKEGDFRKEINKWWNNLSDGQR. Residues 168-187 traverse the membrane as a helical segment; it reads TVTGIIAANVLVFCLWRVPS. Over 188 to 207 the chain is Mitochondrial matrix; it reads LQRTMIRYFTSNPASKVLCS. The helical transmembrane segment at 208–230 threads the bilayer; sequence PMLLSTFSHFSLFHMAANMYVLW. Topologically, residues 231–244 are mitochondrial intermembrane; the sequence is SFSSSIVNILGQEQ. The chain crosses the membrane as a helical span at residues 245-262; sequence FMAVYLSAGVISNFVSYV. Over 263–272 the chain is Mitochondrial matrix; sequence GKVATGRYGP. Residues 273–289 form a helical membrane-spanning segment; the sequence is SLGASGAIMTVLAAVCT. Serine 277 serves as the catalytic Nucleophile. Over 290–295 the chain is Mitochondrial intermembrane; sequence KIPEGR. Residues 296-318 traverse the membrane as a helical segment; the sequence is LAIIFLPMFTFTAGNALKAIIAM. At 319–332 the chain is on the mitochondrial matrix side; sequence DTAGMILGWKFFDH. Residues 333-354 traverse the membrane as a helical segment; it reads AAHLGGALFGIWYVTYGHELIW. Residue histidine 335 is part of the active site. Residues 355-379 are Mitochondrial intermembrane-facing; sequence KNREPLVKIWHEIRTNGPKKGGGSK.

This sequence belongs to the peptidase S54 family. Interacts with PSEN1 and PSEN2. Binds OPA1. P-beta is proteolytically processed (beta-cleavage) in a PARL-dependent manner. The cleavage is inhibited when residues Ser-65, Thr-69 and Ser-70 are all phosphorylated.

It is found in the mitochondrion inner membrane. It localises to the nucleus. It carries out the reaction Cleaves type-1 transmembrane domains using a catalytic dyad composed of serine and histidine that are contributed by different transmembrane domains.. Functionally, required for the control of apoptosis during postnatal growth. Essential for proteolytic processing of an antiapoptotic form of OPA1 which prevents the release of mitochondrial cytochrome c in response to intrinsic apoptotic signals. Required for the maturation of PINK1 into its 52kDa mature form after its cleavage by mitochondrial-processing peptidase (MPP). Promotes cleavage of serine/threonine-protein phosphatase PGAM5 in damaged mitochondria in response to loss of mitochondrial membrane potential. Mediates differential cleavage of PINK1 and PGAM5 depending on the health status of mitochondria, disassociating from PINK1 and associating with PGAM5 in response to mitochondrial membrane potential loss. Required for processing of CLPB into a form with higher protein disaggregase activity by removing an autoinhibitory N-terminal peptide. Promotes processing of DIABLO/SMAC in the mitochondrion which is required for DIABLO apoptotic activity. Also required for cleavage of STARD7 and TTC19. Promotes changes in mitochondria morphology regulated by phosphorylation of P-beta domain. This chain is Presenilin-associated rhomboid-like protein, mitochondrial (PARL), found in Homo sapiens (Human).